A 259-amino-acid chain; its full sequence is Ribosomal RNA small subunit methyltransferase A (259 aa).

Residues N13, L15, G40, E61, D85, and N103 each coordinate S-adenosyl-L-methionine.

The protein belongs to the class I-like SAM-binding methyltransferase superfamily. rRNA adenine N(6)-methyltransferase family. RsmA subfamily.

Its subcellular location is the cytoplasm. The catalysed reaction is adenosine(1518)/adenosine(1519) in 16S rRNA + 4 S-adenosyl-L-methionine = N(6)-dimethyladenosine(1518)/N(6)-dimethyladenosine(1519) in 16S rRNA + 4 S-adenosyl-L-homocysteine + 4 H(+). In terms of biological role, specifically dimethylates two adjacent adenosines (A1518 and A1519) in the loop of a conserved hairpin near the 3'-end of 16S rRNA in the 30S particle. May play a critical role in biogenesis of 30S subunits. The polypeptide is Ribosomal RNA small subunit methyltransferase A (Neisseria gonorrhoeae (strain NCCP11945)).